We begin with the raw amino-acid sequence, 620 residues long: Toxin coregulated pilus biosynthesis protein I (620 aa).

In terms of domain architecture, Methyl-accepting transducer spans 344–580 (TMNDLSIKQT…DVAKQMEDIR (237 aa)).

This sequence belongs to the methyl-accepting chemotaxis (MCP) protein family.

It is found in the cell inner membrane. In terms of biological role, may function as an environmental regulator of TCP biogenesis. Negatively regulates the synthesis of the major pilin subunit of TCP (TcpA). The polypeptide is Toxin coregulated pilus biosynthesis protein I (tcpI) (Vibrio cholerae serotype O1 (strain ATCC 39315 / El Tor Inaba N16961)).